A 357-amino-acid chain; its full sequence is Dual-specificity RNA methyltransferase RlmN (357 aa).

Catalysis depends on glutamate 89, which acts as the Proton acceptor. In terms of domain architecture, Radical SAM core spans glutamate 109–aspartate 340. Cysteine 116 and cysteine 345 are joined by a disulfide. [4Fe-4S] cluster is bound by residues cysteine 123, cysteine 127, and cysteine 130. S-adenosyl-L-methionine is bound by residues glycine 173–glutamate 174, serine 203, serine 226–histidine 228, and asparagine 302. Catalysis depends on cysteine 345, which acts as the S-methylcysteine intermediate.

It belongs to the radical SAM superfamily. RlmN family. The cofactor is [4Fe-4S] cluster.

The protein resides in the cytoplasm. It carries out the reaction adenosine(2503) in 23S rRNA + 2 reduced [2Fe-2S]-[ferredoxin] + 2 S-adenosyl-L-methionine = 2-methyladenosine(2503) in 23S rRNA + 5'-deoxyadenosine + L-methionine + 2 oxidized [2Fe-2S]-[ferredoxin] + S-adenosyl-L-homocysteine. The catalysed reaction is adenosine(37) in tRNA + 2 reduced [2Fe-2S]-[ferredoxin] + 2 S-adenosyl-L-methionine = 2-methyladenosine(37) in tRNA + 5'-deoxyadenosine + L-methionine + 2 oxidized [2Fe-2S]-[ferredoxin] + S-adenosyl-L-homocysteine. Its function is as follows. Specifically methylates position 2 of adenine 2503 in 23S rRNA and position 2 of adenine 37 in tRNAs. m2A2503 modification seems to play a crucial role in the proofreading step occurring at the peptidyl transferase center and thus would serve to optimize ribosomal fidelity. The protein is Dual-specificity RNA methyltransferase RlmN of Helicobacter pylori (strain HPAG1).